The following is a 393-amino-acid chain: 4-hydroxyphenylpyruvate dioxygenase (393 aa).

An N-acetylthreonine modification is found at threonine 2. 2 VOC domains span residues 18–149 (HFHS…LVEK) and 180–338 (IIDH…IFTK). At lysine 132 the chain carries N6-succinyllysine. A Fe cation-binding site is contributed by histidine 183. Serine 211, serine 226, and serine 250 each carry phosphoserine. Positions 266 and 349 each coordinate Fe cation.

It belongs to the 4HPPD family. Homodimer. Fe cation serves as cofactor.

The protein resides in the cytoplasm. Its subcellular location is the endoplasmic reticulum membrane. The protein localises to the golgi apparatus membrane. The enzyme catalyses 3-(4-hydroxyphenyl)pyruvate + O2 = homogentisate + CO2. The protein operates within amino-acid degradation; L-phenylalanine degradation; acetoacetate and fumarate from L-phenylalanine: step 3/6. Catalyzes the conversion of 4-hydroxyphenylpyruvic acid to homogentisic acid, one of the steps in tyrosine catabolism. This chain is 4-hydroxyphenylpyruvate dioxygenase (Hpd), found in Mus musculus (Mouse).